We begin with the raw amino-acid sequence, 86 residues long: Neurotoxin-like protein NTL2 (86 aa).

Residues 1–21 (MKTLLLSLVVVTIVCLDLGYT) form the signal peptide. Intrachain disulfides connect C24/C45, C38/C63, C67/C78, and C79/C84.

It belongs to the three-finger toxin family. Short-chain subfamily. Orphan group I sub-subfamily. Expressed by the venom gland.

It is found in the secreted. This chain is Neurotoxin-like protein NTL2, found in Naja atra (Chinese cobra).